The chain runs to 197 residues: Guanylate kinase (197 aa).

Residues 1–30 form a disordered region; the sequence is MAATPRGTSPVPPDARPRLTVLSGPSGVGK. The 181-residue stretch at 17 to 197 folds into the Guanylate kinase-like domain; the sequence is PRLTVLSGPS…RELLALTNVV (181 aa). 24-31 lines the ATP pocket; the sequence is GPSGVGKS.

Belongs to the guanylate kinase family.

Its subcellular location is the cytoplasm. It catalyses the reaction GMP + ATP = GDP + ADP. Essential for recycling GMP and indirectly, cGMP. In Streptomyces coelicolor (strain ATCC BAA-471 / A3(2) / M145), this protein is Guanylate kinase (gmk).